A 403-amino-acid polypeptide reads, in one-letter code: tRNA(Met) cytidine acetate ligase (403 aa).

Residues 7-20 (IVEY…HLYH), Gly-102, Asn-168, and Arg-193 contribute to the ATP site.

Belongs to the TmcAL family.

It localises to the cytoplasm. It catalyses the reaction cytidine(34) in elongator tRNA(Met) + acetate + ATP = N(4)-acetylcytidine(34) in elongator tRNA(Met) + AMP + diphosphate. In terms of biological role, catalyzes the formation of N(4)-acetylcytidine (ac(4)C) at the wobble position of elongator tRNA(Met), using acetate and ATP as substrates. First activates an acetate ion to form acetyladenylate (Ac-AMP) and then transfers the acetyl group to tRNA to form ac(4)C34. This is tRNA(Met) cytidine acetate ligase from Clostridium tetani (strain Massachusetts / E88).